A 122-amino-acid polypeptide reads, in one-letter code: Large ribosomal subunit protein uL14c (122 aa).

Belongs to the universal ribosomal protein uL14 family. Part of the 50S ribosomal subunit.

The protein localises to the plastid. The protein resides in the chloroplast. In terms of biological role, binds to 23S rRNA. In Oltmannsiellopsis viridis (Marine flagellate), this protein is Large ribosomal subunit protein uL14c.